Here is a 491-residue protein sequence, read N- to C-terminus: Glutamyl-tRNA(Gln) amidotransferase subunit A (491 aa).

Active-site charge relay system residues include Lys-79 and Ser-154. Ser-178 (acyl-ester intermediate) is an active-site residue.

This sequence belongs to the amidase family. GatA subfamily. In terms of assembly, heterotrimer of A, B and C subunits.

The catalysed reaction is L-glutamyl-tRNA(Gln) + L-glutamine + ATP + H2O = L-glutaminyl-tRNA(Gln) + L-glutamate + ADP + phosphate + H(+). Its function is as follows. Allows the formation of correctly charged Gln-tRNA(Gln) through the transamidation of misacylated Glu-tRNA(Gln) in organisms which lack glutaminyl-tRNA synthetase. The reaction takes place in the presence of glutamine and ATP through an activated gamma-phospho-Glu-tRNA(Gln). The sequence is that of Glutamyl-tRNA(Gln) amidotransferase subunit A from Synechococcus sp. (strain CC9902).